We begin with the raw amino-acid sequence, 493 residues long: MAVIDQDNFSNISWHSEQNAESAASTAQVHHESNSSPEYARSGPDDGRPGDNAAGMEHDELDHSGGEILDCTVSDPHKENDGTKDAYVSYLITTNTTFPSFQKPKTTVRRRFTDFVFLYKVLCRDYQACAVPPLPDKQRMEYVRGDRFGTDFTARRAYSLQRFLARLALHPILRKADILHAFLESPDWNATMRSRSVRGSLASPGGIGDSTLGGSAAAGGGGGVFDTFADSFMNAFTKVHKPDRRFIEIKEKSDKLDEDLNHIEKVVARVARREADIESDLKDLAEQFQKLITLEPGVETAVRAFAASVEDTASGLKKLKDHTDQDYLGSLRDMVAYSGTLKNLLKAREQKQLDYEQLTEYLNKSRTDRDMLASGQSYGAGSALMSGAGGFIRSKIEDVRGVDHEQARRDRQRKLELRIEELTREVEVARNESESFAEQVSREVESFDWIKRVEFKRQFSGLADAHIEFYGDVMSVWEQYVMEMEKEGVVLPA.

A disordered region spans residues 1 to 77 (MAVIDQDNFS…ILDCTVSDPH (77 aa)). Polar residues predominate over residues 7–28 (DNFSNISWHSEQNAESAASTAQ). Residues 56–65 (MEHDELDHSG) show a composition bias toward basic and acidic residues. The 123-residue stretch at 68 to 190 (ILDCTVSDPH…AFLESPDWNA (123 aa)) folds into the PX domain. Residues arginine 111, threonine 113, lysine 137, and arginine 156 each coordinate a 1,2-diacyl-sn-glycero-3-phospho-(1D-myo-inositol-3-phosphate). Coiled-coil stretches lie at residues 248–292 (EIKE…QKLI), 338–363 (SGTLKNLLKAREQKQLDYEQLTEYLN), and 405–442 (EQARRDRQRKLELRIEELTREVEVARNESESFAEQVSR).

The protein belongs to the sorting nexin family.

It is found in the cytoplasm. It localises to the membrane. Its subcellular location is the endosome membrane. Sorting nexin, involved in the separation or division of vacuoles throughout the entire life cycle of the cells. Involved in retrieval of late-Golgi SNAREs from post-Golgi endosomes to the trans-Golgi network, for cytoplasm to vacuole transport (Cvt), and autophagy of large cargos including mitophagy, pexophagy and glycophagy. This chain is Sorting nexin-4 (vsp-5), found in Neurospora crassa (strain ATCC 24698 / 74-OR23-1A / CBS 708.71 / DSM 1257 / FGSC 987).